The following is a 272-amino-acid chain: N-acetylmuramoyl-L-alanine amidase CwlA (272 aa).

The N-acetylmuramoyl-L-alanine amidase domain maps to 24-142 (KAEYITIHNT…QDWNGKYCPH (119 aa)).

Belongs to the N-acetylmuramoyl-L-alanine amidase 2 family.

It carries out the reaction Hydrolyzes the link between N-acetylmuramoyl residues and L-amino acid residues in certain cell-wall glycopeptides.. Autolysins are involved in some important biological processes such as cell separation, cell-wall turnover, competence for genetic transformation, formation of the flagella and sporulation. This is N-acetylmuramoyl-L-alanine amidase CwlA (cwlA) from Bacillus subtilis (strain 168).